A 234-amino-acid chain; its full sequence is uncharacterized protein (234 aa).

4 helical membrane-spanning segments follow: residues 22–42 (TFLNTLIYCILLVIYEYIPLI), 59–79 (INWALSFGILPCAFAIFAYLI), 154–174 (FWIFFEFSIIALISFLIIFFC), and 186–206 (LLSLFFFVILSFSVSGIIFAL).

The protein resides in the cell membrane. This is an uncharacterized protein from Escherichia coli (strain K12).